The sequence spans 291 residues: MTTLAIDIGGTKLAAALIGADGQIRDRRELPTPASQTPEALRDALSALVSPLQAHAQRVAIASTGIIRDGSLLALNPHNLGGLLHFPLVKTLEQLTNLPTIAINDAQAAAWAEYQALEGDITDMVFITVSTGVGGGVVSGGKLLTGPGGLAGHIGHTLADPHGPVCGCGRTGCVEAIASGRGIAAAAQGELAGADARTIFTRAGQGDEQAQQLIHRSARTLARLIADIKATTDCQCVVVGGSVGLAEGYLALVEMYLAQEPAAFHVDLLAAHYRHDAGLLGAALLAQGEKL.

Residues 5–12 (AIDIGGTK) and 132–139 (GVGGGVVS) contribute to the ATP site. Residues His-156, Cys-166, Cys-168, and Cys-173 each contribute to the Zn(2+) site.

It belongs to the ROK (NagC/XylR) family. NanK subfamily. Homodimer.

The catalysed reaction is an N-acyl-D-mannosamine + ATP = an N-acyl-D-mannosamine 6-phosphate + ADP + H(+). Its pathway is amino-sugar metabolism; N-acetylneuraminate degradation; D-fructose 6-phosphate from N-acetylneuraminate: step 2/5. Functionally, catalyzes the phosphorylation of N-acetylmannosamine (ManNAc) to ManNAc-6-P. In Escherichia coli (strain ATCC 8739 / DSM 1576 / NBRC 3972 / NCIMB 8545 / WDCM 00012 / Crooks), this protein is N-acetylmannosamine kinase.